The primary structure comprises 385 residues: Cotranscriptional regulator ARB2A homolog (385 aa).

Disordered regions lie at residues 1-65 (MSDI…NGEE) and 220-239 (EEQKEKAKEEEEKKDDNGKL). The segment covering 52–62 (NNNNNNSNNSN) has biased composition (low complexity). Basic and acidic residues predominate over residues 220 to 238 (EEQKEKAKEEEEKKDDNGK).

Belongs to the ARB2A family.

This Dictyostelium discoideum (Social amoeba) protein is Cotranscriptional regulator ARB2A homolog.